The chain runs to 180 residues: Probable chorismate pyruvate-lyase (180 aa).

Positions 82, 120, and 165 each coordinate substrate.

It belongs to the UbiC family.

It localises to the cytoplasm. The enzyme catalyses chorismate = 4-hydroxybenzoate + pyruvate. It functions in the pathway cofactor biosynthesis; ubiquinone biosynthesis. Functionally, removes the pyruvyl group from chorismate, with concomitant aromatization of the ring, to provide 4-hydroxybenzoate (4HB) for the ubiquinone pathway. This is Probable chorismate pyruvate-lyase from Aliivibrio fischeri (strain ATCC 700601 / ES114) (Vibrio fischeri).